Here is a 61-residue protein sequence, read N- to C-terminus: N-acetyl-D-glucosamine kinase (61 aa).

Tyr-30 is modified (phosphotyrosine). Ser-45 is a binding site for ATP.

The protein belongs to the eukaryotic-type N-acetylglucosamine kinase family. Homodimer.

The enzyme catalyses N-acetyl-D-glucosamine + ATP = N-acetyl-D-glucosamine 6-phosphate + ADP + H(+). It carries out the reaction aldehydo-N-acetyl-D-mannosamine + ATP = aldehydo-N-acetyl-D-mannosamine 6-phosphate + ADP + H(+). The catalysed reaction is N-acetyl-D-muramoyl-L-alanyl-D-isoglutamine + ATP = 6-O-phospho-N-acetyl-D-muramoyl-L-alanyl-D-isoglutamine + ADP + H(+). Its pathway is amino-sugar metabolism; N-acetylneuraminate degradation. Its function is as follows. Converts endogenous N-acetylglucosamine (GlcNAc), a major component of complex carbohydrates, from lysosomal degradation or nutritional sources into GlcNAc 6-phosphate. Also has N-acetylmannosamine (ManNAc) kinase activity. Involved in the N-glycolylneuraminic acid (Neu5Gc) degradation pathway. Also involved in innate immunity by promoting detection of bacterial peptidoglycan by NOD2: acts by catalyzing phosphorylation of muramyl dipeptide (MDP), a fragment of bacterial peptidoglycan, to generate 6-O-phospho-muramyl dipeptide, which acts as a direct ligand for NOD2. The polypeptide is N-acetyl-D-glucosamine kinase (Mesocricetus auratus (Golden hamster)).